Here is a 181-residue protein sequence, read N- to C-terminus: Adenine phosphoribosyltransferase (181 aa).

Belongs to the purine/pyrimidine phosphoribosyltransferase family. Homodimer.

Its subcellular location is the cytoplasm. It catalyses the reaction AMP + diphosphate = 5-phospho-alpha-D-ribose 1-diphosphate + adenine. The protein operates within purine metabolism; AMP biosynthesis via salvage pathway; AMP from adenine: step 1/1. Its function is as follows. Catalyzes a salvage reaction resulting in the formation of AMP, that is energically less costly than de novo synthesis. In Brucella suis (strain ATCC 23445 / NCTC 10510), this protein is Adenine phosphoribosyltransferase.